The primary structure comprises 169 residues: Putative glycine cleavage system H protein, mitochondrial (169 aa).

The 83-residue stretch at 60-142 (VGTVGITSYA…EEEGWICKIK (83 aa)) folds into the Lipoyl-binding domain. Lysine 101 is subject to N6-lipoyllysine. Serine 131 is modified (phosphoserine).

It belongs to the GcvH family. Component of the glycine decarboxylase complex (GDC), which is composed of four proteins: P, T, L and H. The cofactor is (R)-lipoate.

The protein localises to the mitochondrion. The glycine cleavage system (glycine decarboxylase complex) catalyzes the degradation of glycine. The H protein shuttles the methylamine group of glycine from the P protein to the T protein. In Schizosaccharomyces pombe (strain 972 / ATCC 24843) (Fission yeast), this protein is Putative glycine cleavage system H protein, mitochondrial (gcv3).